Reading from the N-terminus, the 839-residue chain is LPS-assembly protein LptD (839 aa).

An N-terminal signal peptide occupies residues 1–21 (MAIGITACVLSLINYQGLAYS).

The protein belongs to the LptD family. Component of the lipopolysaccharide transport and assembly complex. Interacts with LptE and LptA.

The protein resides in the cell outer membrane. Together with LptE, is involved in the assembly of lipopolysaccharide (LPS) at the surface of the outer membrane. The sequence is that of LPS-assembly protein LptD from Legionella pneumophila subsp. pneumophila (strain Philadelphia 1 / ATCC 33152 / DSM 7513).